We begin with the raw amino-acid sequence, 149 residues long: Protein SprT-like (149 aa).

Residues Leu6–Lys147 form the SprT-like domain. Zn(2+) is bound at residue His67. The active site involves Glu68. Position 71 (His71) interacts with Zn(2+).

The protein belongs to the SprT family. Zn(2+) is required as a cofactor.

It localises to the cytoplasm. The chain is Protein SprT-like from Geobacillus kaustophilus (strain HTA426).